Here is a 608-residue protein sequence, read N- to C-terminus: Elongation factor 4 (608 aa).

Positions 11-193 constitute a tr-type G domain; sequence KKIRNFSIIA…QIVEKVPEPS (183 aa). GTP-binding positions include 23 to 28 and 140 to 143; these read DHGKST and NKID.

This sequence belongs to the TRAFAC class translation factor GTPase superfamily. Classic translation factor GTPase family. LepA subfamily.

Its subcellular location is the cell membrane. It catalyses the reaction GTP + H2O = GDP + phosphate + H(+). Its function is as follows. Required for accurate and efficient protein synthesis under certain stress conditions. May act as a fidelity factor of the translation reaction, by catalyzing a one-codon backward translocation of tRNAs on improperly translocated ribosomes. Back-translocation proceeds from a post-translocation (POST) complex to a pre-translocation (PRE) complex, thus giving elongation factor G a second chance to translocate the tRNAs correctly. Binds to ribosomes in a GTP-dependent manner. The chain is Elongation factor 4 from Listeria welshimeri serovar 6b (strain ATCC 35897 / DSM 20650 / CCUG 15529 / CIP 8149 / NCTC 11857 / SLCC 5334 / V8).